The primary structure comprises 1960 residues: Nuclear pore complex protein Nup98-Nup96 (1960 aa).

46 consecutive repeat copies span residues 2–3, 9–10, 18–19, 30–31, 35–36, 43–44, 59–60, 73–74, 81–82, 92–93, 105–106, 117–118, 125–126, 135–136, 148–149, 160–161, 163–164, 174–175, 264–265, 266–267, 282–283, 293–294, 304–305, 309–310, 319–320, 333–334, 352–353, 358–359, 365–366, 377–378, 384–385, 387–388, 400–401, 413–414, 426–427, 428–429, 441–442, 454–455, 467–468, 493–494, 496–497, 516–517, 527–528, 546–547, 553–554, and 565–566. The segment at 2 to 566 is 46 X 2 AA repeats of F-G; that stretch reads FGGAKPSFGA…GGSLGGGGFG (565 aa). Disordered regions lie at residues 698–768 and 781–860; these read KSVE…WLHP and TGMD…AANQ. Positions 704 to 718 are enriched in polar residues; it reads NPSSSIGSAPNTPQS. A compositionally biased stretch (basic and acidic residues) spans 755-768; sequence ESQDNGRRESWLHP. 2 stretches are compositionally biased toward polar residues: residues 781-794 and 806-850; these read TGMD…STLN and RPSS…SNRS. The region spanning 886–1028 is the Peptidase S59 domain; that stretch reads RVGYYTIPSL…GSWVFRVKHF (143 aa). Serine 1029 functions as the Nucleophile in the catalytic mechanism.

The protein belongs to the nucleoporin GLFG family. As to quaternary structure, part of the nuclear pore complex (NPC). Interacts with Rae1. Nuclear pore complex protein Nup98: Interacts with pzg and Chro. Interacts with MBD-R2; the interaction allows Nup98 recruitment to chromatin. Interacts with Trx. Interacts with Wds. Interacts with Mgtor and Cp190. Upon ecdysone stimulation, interacts with EcR, CTCF, su(Hw) and Trl. In terms of processing, isoform A and isoform C are autoproteolytically cleaved to yield Nup98 and Nup96 or Nup98 only, respectively. Expressed in brain.

Its subcellular location is the chromosome. It is found in the nucleus. The protein localises to the nucleoplasm. The protein resides in the nucleus membrane. It localises to the nuclear pore complex. Its function is as follows. Part of the nuclear pore complex (NPC). Required for MAD import as part of the Nup107-160 complex and required for nuclear export of Moe probably via its association with Rae1. Plays a role in nuclear mRNA export. Promotes cell antiviral response by up-regulating FoxK-dependent antiviral gene transcription. In germline stem cells, involved in their maintenance and division together with the TGF-Beta and EGFR signaling pathways. In larval lymph glands, has a role in the maintenance of hematopoiesis by regulating Pvr expression. In terms of biological role, part of the nuclear pore complex (NPC). In the nucleoplasm, binds to transcriptionally active chromatin with a preference for regulatory regions; co-localizes with RNA polymerase II in a RNA-independent manner and before transition into transcription elongation. Plays a role in the transcriptional memory process by stabilizing enhancer-promoter loops and by mediating anchoring of chromatin to the nuclear pore complex region. During larval development, interacts with trx and MBD-R2 and regulates transcription of developmental genes including ecdysone-responsive genes such as Eip74 and E23. Part of the nuclear pore complex (NPC). The sequence is that of Nuclear pore complex protein Nup98-Nup96 from Drosophila melanogaster (Fruit fly).